Consider the following 213-residue polypeptide: CDP-diacylglycerol--inositol 3-phosphatidyltransferase (213 aa).

At 1–5 (MPEEN) the chain is on the cytoplasmic side. The helical transmembrane segment at 6-26 (IFLFVPNLIGYARIVFAIISF) threads the bilayer. Position 27 (Tyr-27) is a topological domain, lumenal. A helical transmembrane segment spans residues 28–48 (FMPCCPFTASSFYLLSGLLDA). Mg(2+) contacts are provided by Asp-47 and Asp-50. Topologically, residues 49–73 (FDGHAARALNQGTRFGAMLDMLTDR) are cytoplasmic. The a CDP-1,2-diacyl-sn-glycerol site is built by Gly-51, Arg-55, and Thr-61. Mg(2+) contacts are provided by Asp-68 and Asp-72. Asp-72 functions as the Proton acceptor in the catalytic mechanism. The chain crosses the membrane as a helical span at residues 74–94 (CATMCLLVNLALLYPRATLLF). A topological domain (lumenal) is located at residue Gln-95. Residues 96–116 (LSMSLDVASHWLHLHSSVVRG) form a helical membrane-spanning segment. The Cytoplasmic segment spans residues 117 to 139 (SESHKMIDLSGNPVLRIYYTSRP). A helical transmembrane segment spans residues 140-160 (ALFTLCAGNELFYCLLYLFNF). Over 161 to 174 (SEGPLVGSVGLFRM) the chain is Lumenal. Residues 175–195 (GLWITAPIALLKSIISVIHLV) traverse the membrane as a helical segment. At 196-213 (TAARNMAALDAADRAKKK) the chain is on the cytoplasmic side.

Belongs to the CDP-alcohol phosphatidyltransferase class-I family. The cofactor is Mn(2+). Mg(2+) is required as a cofactor. As to expression, detected in liver (at protein level). Widely expressed. Highly expressed in the brain and kidney; lower levels in heart, spleen, lung, liver, skeletal muscle and testis.

It is found in the endoplasmic reticulum membrane. The protein resides in the cell membrane. It catalyses the reaction a CDP-1,2-diacyl-sn-glycerol + myo-inositol = a 1,2-diacyl-sn-glycero-3-phospho-(1D-myo-inositol) + CMP + H(+). Functionally, catalyzes the biosynthesis of phosphatidylinositol (PtdIns) as well as PtdIns:inositol exchange reaction. May thus act to reduce an excessive cellular PtdIns content. The exchange activity is due to the reverse reaction of PtdIns synthase and is dependent on CMP, which is tightly bound to the enzyme. This chain is CDP-diacylglycerol--inositol 3-phosphatidyltransferase, found in Rattus norvegicus (Rat).